The sequence spans 73 residues: Large ribosomal subunit protein bL31 (73 aa).

Belongs to the bacterial ribosomal protein bL31 family. Type A subfamily. In terms of assembly, part of the 50S ribosomal subunit.

Its function is as follows. Binds the 23S rRNA. In Dinoroseobacter shibae (strain DSM 16493 / NCIMB 14021 / DFL 12), this protein is Large ribosomal subunit protein bL31.